The chain runs to 147 residues: D-aminoacyl-tRNA deacylase (147 aa).

The short motif at 136 to 137 is the Gly-cisPro motif, important for rejection of L-amino acids element; that stretch reads GP.

This sequence belongs to the DTD family. As to quaternary structure, homodimer.

It localises to the cytoplasm. The catalysed reaction is glycyl-tRNA(Ala) + H2O = tRNA(Ala) + glycine + H(+). The enzyme catalyses a D-aminoacyl-tRNA + H2O = a tRNA + a D-alpha-amino acid + H(+). In terms of biological role, an aminoacyl-tRNA editing enzyme that deacylates mischarged D-aminoacyl-tRNAs. Also deacylates mischarged glycyl-tRNA(Ala), protecting cells against glycine mischarging by AlaRS. Acts via tRNA-based rather than protein-based catalysis; rejects L-amino acids rather than detecting D-amino acids in the active site. By recycling D-aminoacyl-tRNA to D-amino acids and free tRNA molecules, this enzyme counteracts the toxicity associated with the formation of D-aminoacyl-tRNA entities in vivo and helps enforce protein L-homochirality. The sequence is that of D-aminoacyl-tRNA deacylase from Streptococcus equi subsp. equi (strain 4047).